The chain runs to 449 residues: Probable multidrug resistance protein NorM (449 aa).

The next 12 helical transmembrane spans lie at 17–39 (LMWP…TIMA), 54–76 (VGLW…PLVA), 97–119 (VAVS…LPIL), 129–151 (AGLF…ALRG), 164–186 (VISL…GIGP), 196–215 (GFAT…SYIY), 243–265 (LGLP…AIVL), 280–302 (MSVT…IRVG), 315–337 (LVQK…LIWF), 352–369 (VFDI…YQLM), 390–412 (MWIT…ARVA), and 417–439 (AGVW…MRLY).

The protein belongs to the multi antimicrobial extrusion (MATE) (TC 2.A.66.1) family.

The protein resides in the cell inner membrane. Functionally, multidrug efflux pump. In Acinetobacter baylyi (strain ATCC 33305 / BD413 / ADP1), this protein is Probable multidrug resistance protein NorM (norM).